Reading from the N-terminus, the 78-residue chain is Small ribosomal subunit protein uS17 (78 aa).

This sequence belongs to the universal ribosomal protein uS17 family. As to quaternary structure, part of the 30S ribosomal subunit.

Its function is as follows. One of the primary rRNA binding proteins, it binds specifically to the 5'-end of 16S ribosomal RNA. In Pelagibacter ubique (strain HTCC1062), this protein is Small ribosomal subunit protein uS17.